Here is a 398-residue protein sequence, read N- to C-terminus: Trans-2-enoyl-CoA reductase [NADH] (398 aa).

NAD(+) contacts are provided by residues 47–52, 74–75, 111–112, and 139–140; these read GASSGF, YE, DA, and LA. Tyrosine 225 serves as a coordination point for substrate. Residue tyrosine 235 is the Proton donor of the active site. NAD(+) is bound by residues lysine 244 and 274–276; that span reads LVT.

The protein belongs to the TER reductase family. Monomer.

The catalysed reaction is a 2,3-saturated acyl-CoA + NAD(+) = a (2E)-enoyl-CoA + NADH + H(+). It functions in the pathway lipid metabolism; fatty acid biosynthesis. Functionally, involved in the fatty acid synthesis (FAS II). Catalyzes the reduction of the carbon-carbon double bond of crotonyl-CoA to yield butyryl-CoA. This Clostridium acetobutylicum (strain ATCC 824 / DSM 792 / JCM 1419 / IAM 19013 / LMG 5710 / NBRC 13948 / NRRL B-527 / VKM B-1787 / 2291 / W) protein is Trans-2-enoyl-CoA reductase [NADH].